A 430-amino-acid chain; its full sequence is Adenylosuccinate synthetase (430 aa).

Residues 12–18 (GDEGKGK) and 40–42 (GHT) each bind GTP. Asp-13 functions as the Proton acceptor in the catalytic mechanism. Mg(2+) is bound by residues Asp-13 and Gly-40. IMP is bound by residues 13–16 (DEGK), 38–41 (NAGH), Thr-130, Arg-144, Gln-224, and Thr-239. Residue His-41 is the Proton donor of the active site. The tract at residues 277-297 (PFPTEQDNETGRKIGERGREF) is disordered. The span at 285-296 (ETGRKIGERGRE) shows a compositional bias: basic and acidic residues. Residue 299–305 (TNTGRPR) coordinates substrate. Arg-303 is an IMP binding site. GTP is bound by residues Arg-305, 331 to 333 (KLD), and 413 to 415 (STS).

Belongs to the adenylosuccinate synthetase family. In terms of assembly, homodimer. Mg(2+) serves as cofactor.

The protein localises to the cytoplasm. It carries out the reaction IMP + L-aspartate + GTP = N(6)-(1,2-dicarboxyethyl)-AMP + GDP + phosphate + 2 H(+). It functions in the pathway purine metabolism; AMP biosynthesis via de novo pathway; AMP from IMP: step 1/2. Functionally, plays an important role in the de novo pathway of purine nucleotide biosynthesis. Catalyzes the first committed step in the biosynthesis of AMP from IMP. The polypeptide is Adenylosuccinate synthetase (Bradyrhizobium sp. (strain ORS 278)).